A 468-amino-acid polypeptide reads, in one-letter code: Uronate isomerase (468 aa).

It belongs to the metallo-dependent hydrolases superfamily. Uronate isomerase family.

The catalysed reaction is D-glucuronate = D-fructuronate. The enzyme catalyses aldehydo-D-galacturonate = keto-D-tagaturonate. It functions in the pathway carbohydrate metabolism; pentose and glucuronate interconversion. This chain is Uronate isomerase, found in Endomicrobium trichonymphae.